The sequence spans 1199 residues: RNA-binding protein 20 (1199 aa).

Disordered stretches follow at residues 1–55, 163–186, and 320–346; these read MVLA…PQAS, PSTA…SLPS, and ERPP…PASQ. Over residues 25-42 the composition is skewed to low complexity; sequence VMPGVQGPSVPQGQQGMQ. Positions 43–52 are enriched in pro residues; it reads PLPPPPPPQP. Positions 170–183 are enriched in low complexity; it reads SPPSQTGGPGPSVS. The segment at 410 to 444 adopts a U1-type zinc-finger fold; it reads HLPHICSICDKKVFDLKDWELHVKGKLHAQKCLLF. An RRM domain is found at 520–595; the sequence is RVVHICNLPE…EKLLIRMSTR (76 aa). A compositionally biased stretch (basic and acidic residues) spans 626-636; that stretch reads EADRYGPERPR. Disordered stretches follow at residues 626-685, 720-884, and 944-1077; these read EADR…NGED, REKY…YPTN, and GETL…SQAC. Residues 630-649 form an RS region; that stretch reads YGPERPRSRSPMSRSLSPRS. A phosphoserine mark is found at Ser637, Ser639, Ser642, Ser644, and Ser651. A compositionally biased stretch (low complexity) spans 638-649; it reads RSPMSRSLSPRS. Over residues 667 to 685 the composition is skewed to basic and acidic residues; sequence YAWRDEDRETVPRRENGED. A Phosphoserine modification is found at Ser728. Basic and acidic residues-rich tracts occupy residues 739–758, 770–831, and 859–868; these read KGRE…DKYP, RKEE…KESQ, and ENTRTKKGQD. Ser787 is subject to Phosphoserine. A phosphoserine mark is found at Ser871, Ser873, and Ser955. Over residues 962–971 the composition is skewed to polar residues; sequence VPSTSASCPN. Phosphoserine is present on residues Ser991, Ser1026, Ser1038, Ser1049, Ser1054, Ser1058, Ser1070, Ser1088, and Ser1093. Residues 1042–1055 show a composition bias toward basic and acidic residues; that stretch reads DDCKARGSPEDGSH. The span at 1067 to 1077 shows a compositional bias: polar residues; that stretch reads PTESDLQSQAC. Residues 1133–1164 form a Matrin-type zinc finger; the sequence is FYCKLCGLFYTSEEAAKVSHCRSTVHYRNLQK. The segment at 1172–1199 is disordered; the sequence is EGLKETEGTDSPSPERGGIGPHLERKKL. Residues Ser1182 and Ser1184 each carry the phosphoserine modification.

As to quaternary structure, associates with components of the U1 and U2 U1 small nuclear ribonucleoprotein complexes. Post-translationally, phosphorylation regulates the subcellular localization. Phosphorylation of Ser-637 and Ser-639 in the RS (arginine/serine-rich) region promotes nuclear localization of the protein. In contrast, phosphorylation of the C-terminal disordered region promotes localization to cytoplasmic ribonucleoprotein granules. Predominantly expressed in striated muscle, with highest expression in the heart. In differentiating myoblasts, expression correlates with sarcomere assembly: expression peaks when alpha-actinin is localized mainly in mature Z bodies within the nascent myofiber and expression declines as the sarcomeres continue to mature. Also expressed in kidney.

It is found in the nucleus. It localises to the cytoplasm. The protein resides in the cytoplasmic ribonucleoprotein granule. RNA-binding protein that acts as a regulator of mRNA splicing of a subset of genes encoding key structural proteins involved in cardiac development, such as TTN (Titin), CACNA1C, CAMK2D or PDLIM5/ENH. Acts as a repressor of mRNA splicing: specifically binds the 5'UCUU-3' motif that is predominantly found within intronic sequences of pre-mRNAs, leading to the exclusion of specific exons in target transcripts. RBM20-mediated exon skipping is hormone-dependent and is essential for TTN isoform transition in both cardiac and skeletal muscles. RBM20-mediated exon skipping of TTN provides substrates for the formation of circular RNA (circRNAs) from the TTN transcripts. Together with RBM24, promotes the expression of short isoforms of PDLIM5/ENH in cardiomyocytes. This Mus musculus (Mouse) protein is RNA-binding protein 20.